Consider the following 500-residue polypeptide: Galactofuranose transporter ATP-binding protein YtfR (500 aa).

2 ABC transporter domains span residues 10–245 and 259–497; these read LRTE…LGRE and LSDK…IMNA. 42–49 lines the ATP pocket; the sequence is GENGAGKS.

It belongs to the ABC transporter superfamily. In terms of assembly, the complex is composed of two ATP-binding proteins (YtfR), two transmembrane proteins (YtfT and YjfF) and a solute-binding protein (YtfQ).

It localises to the cell inner membrane. It catalyses the reaction D-galactofuranose(out) + ATP + H2O = D-galactofuranose(in) + ADP + phosphate + H(+). Its function is as follows. Part of the ABC transporter complex YtfQRT-YjfF involved in galactofuranose transport. Responsible for energy coupling to the transport system. This Escherichia coli O157:H7 protein is Galactofuranose transporter ATP-binding protein YtfR (ytfR).